The sequence spans 196 residues: Pyridoxal 5'-phosphate synthase subunit PdxT (196 aa).

Residue 47–49 participates in L-glutamine binding; it reads GES. Cysteine 79 serves as the catalytic Nucleophile. Residues arginine 106 and 134-135 contribute to the L-glutamine site; that span reads IR. Residues histidine 170 and glutamate 172 each act as charge relay system in the active site.

The protein belongs to the glutaminase PdxT/SNO family. In the presence of PdxS, forms a dodecamer of heterodimers. Only shows activity in the heterodimer.

It carries out the reaction aldehydo-D-ribose 5-phosphate + D-glyceraldehyde 3-phosphate + L-glutamine = pyridoxal 5'-phosphate + L-glutamate + phosphate + 3 H2O + H(+). The enzyme catalyses L-glutamine + H2O = L-glutamate + NH4(+). It functions in the pathway cofactor biosynthesis; pyridoxal 5'-phosphate biosynthesis. Functionally, catalyzes the hydrolysis of glutamine to glutamate and ammonia as part of the biosynthesis of pyridoxal 5'-phosphate. The resulting ammonia molecule is channeled to the active site of PdxS. The chain is Pyridoxal 5'-phosphate synthase subunit PdxT from Bacillus cytotoxicus (strain DSM 22905 / CIP 110041 / 391-98 / NVH 391-98).